Consider the following 421-residue polypeptide: Prenyltransferase asqH2 (421 aa).

The disordered stretch occupies residues 1–28 (MDRNSFTAYGPATGAITESGEQENDHTK). An L-tryptophan-binding site is contributed by E105. Residues R119, R272, K274, Y276, and Y341 each coordinate substrate.

The protein belongs to the tryptophan dimethylallyltransferase family.

The enzyme catalyses yaequinolone E + dimethylallyl diphosphate + H2O = [(1'E)-3'-hydroxy-3',7'-dimethylocta-1',6'-dien-1'-yl]-quinolinone B + diphosphate. The protein operates within secondary metabolite biosynthesis. Its pathway is alkaloid biosynthesis. It functions in the pathway mycotoxin biosynthesis. Functionally, prenyltransferase; part of the gene cluster that mediates the biosynthesis of the aspoquinolone mycotoxins. Within the pathway, the prenyltransferase asqH2 performs the second alkylation with DMAPP at delta(3') double bond to yield a carbenium ion intermediate, which can be attacked by H(2)O to yield a styrenyl quinolone containing a C3'-hydroxyprenyl chain. The first step of the pathway is catalyzed by the nonribosomal peptide synthetase asqK that condenses anthranilic acid and O-methyl-L-tyrosine to produce 4'-methoxycyclopeptin. 4'-methoxycyclopeptin is then converted to 4'-methoxydehydrocyclopeptin by the ketoglutarate-dependent dioxygenase asqJ. AsqJ also converts its first product 4'-methoxydehydrocyclopeptin to 4'-methoxycyclopenin. The following conversion of 4'-methoxycyclopenin into 4'-methoxyviridicatin is catalyzed by the cyclopenase asqI. 4'-methoxyviridicatin is the precursor of quinolone natural products, and is further converted to quinolinone B. The prenyltransferase asqH1 then catalyzes the canonical Friedel-Crafts alkylation of quinolinone B with dimethylallyl cation to yield dimethylallyl quinolone, which is subjected to FAD-dependent dehydrogenation by the FAD-linked oxidoreductase asqF to yield conjugated aryl diene. The delta(3') double bond then serves as the site of the second alkylation with DMAPP catalyzed by the prenyltransferase asqH2 to yield a carbenium ion intermediate, which can be attacked by H(2)O to yield a styrenyl quinolone containing a C3'-hydroxyprenyl chain. The FAD-dependent monooxygenase asqG performs epoxidation of the terminal C7'-C8' olefin. Finally, after dehydratation of the epoxide at C3 by asqC, the quinolone epoxide rearrangement protein asqO catalyzes an enzymatic 3-exo-tet cyclization to yield the cyclopropyl-THF ring system in aspoquinolone. This Emericella nidulans (strain FGSC A4 / ATCC 38163 / CBS 112.46 / NRRL 194 / M139) (Aspergillus nidulans) protein is Prenyltransferase asqH2.